The chain runs to 390 residues: Mannitol-1-phosphate 5-dehydrogenase (390 aa).

Residue 3–14 coordinates NAD(+); it reads ALHFGAGNIGRG.

The protein belongs to the mannitol dehydrogenase family.

It catalyses the reaction D-mannitol 1-phosphate + NAD(+) = beta-D-fructose 6-phosphate + NADH + H(+). The chain is Mannitol-1-phosphate 5-dehydrogenase from Buchnera aphidicola subsp. Baizongia pistaciae (strain Bp).